Consider the following 451-residue polypeptide: GTPase Der (451 aa).

2 EngA-type G domains span residues 5 to 170 (PVVA…VAPP) and 186 to 359 (IKLA…AAAF). GTP contacts are provided by residues 11 to 18 (GRPNVGKS), 58 to 62 (DTGGF), 122 to 125 (NKAE), 192 to 199 (GRPNVGKS), 239 to 243 (DTAGL), and 304 to 307 (NKWD). A KH-like domain is found at 360–444 (AKLSTPRLTR…PLRIEFKSSR (85 aa)).

The protein belongs to the TRAFAC class TrmE-Era-EngA-EngB-Septin-like GTPase superfamily. EngA (Der) GTPase family. In terms of assembly, associates with the 50S ribosomal subunit.

GTPase that plays an essential role in the late steps of ribosome biogenesis. The polypeptide is GTPase Der (Bordetella bronchiseptica (strain ATCC BAA-588 / NCTC 13252 / RB50) (Alcaligenes bronchisepticus)).